The chain runs to 374 residues: MTTYVWSYLLEYERERADILDAVQKVFASGSLILGQSVENFETEYARYHGIAHCVGVDNGTNAVKLALESVGVGRDDEVVTVSNTAAPTVLAIDEIGARPVFVDVRDEDYLMDTDLVEAAVTPRTKAIVPVHLYGQCVDMTALRELADRRGLKLVEDCAQAHGARRDGRLAGTMSDAAAFSFYPTKVLGAYGDGGAVVTNDDETARALRRLRYYGMEEVYYVTRTPGHNSRLDEVQAEILRRKLTRLDAYVAGRRAVAQRYVDGLADLQDSHGLELPVVTDGNEHVFYVYVVRHPRRDEIIKRLRDGYDISLNISYPWPVHTMTGFAHLGVASGSLPVTERLAGEIFSLPMYPSLPHDLQDRVIEAVREVITGL.

Pyridoxal 5'-phosphate contacts are provided by residues Gly60, Gln160, 181 to 186 (SFYPTK), Tyr214, Tyr221, 229 to 231 (NSR), and Tyr316. An N6-(pyridoxal phosphate)lysine modification is found at Lys186.

It belongs to the degT/dnrJ/eryC1 family. Requires pyridoxal 5'-phosphate as cofactor.

It carries out the reaction dTDP-3-amino-3,4,6-trideoxy-alpha-D-glucose + 2-oxoglutarate = dTDP-3-dehydro-4,6-dideoxy-alpha-D-glucose + L-glutamate. The protein operates within antibiotic biosynthesis. Its function is as follows. Involved in the biosynthesis of the amino sugar dTDP-L-megosamine which is found in the macrolide antibiotic and antiparasitic megalomicin A. Catalyzes the reversible transfer of the amino group from L-glutamate to the C-3 position of dTDP-3-keto-4,6-deoxyglucose to yield dTDP-3-amino-3,4,6-trideoxyglucose. The protein is dTDP-3-amino-3,4,6-trideoxy-alpha-D-glucose transaminase of Micromonospora megalomicea subsp. nigra.